The primary structure comprises 398 residues: O-methyltransferase mpaG' (398 aa).

Residue S144 coordinates (4E,8E)-10-(4,6-dihydroxy-7-methyl-3-oxo-1,3-dihydro-2-benzofuran-5-yl)-4,8-dimethyldeca-4,8-dienoate. S144 provides a ligand contact to 4-farnesyl-3,5-dihydroxy-6-methylphthalide. Position 144 (S144) interacts with 6-O-desmethylmycophenolate. N197 contacts S-adenosyl-L-homocysteine. A (4E,8E)-10-(4,6-dihydroxy-7-methyl-3-oxo-1,3-dihydro-2-benzofuran-5-yl)-4,8-dimethyldeca-4,8-dienoate-binding site is contributed by Y199. A 4-farnesyl-3,5-dihydroxy-6-methylphthalide-binding site is contributed by Y199. Y199 is a 6-O-desmethylmycophenolate binding site. The S-adenosyl-L-homocysteine site is built by Y203, D237, G239, H244, D245, D264, and R265. S-adenosyl-L-methionine is bound at residue D264. (4E,8E)-10-(4,6-dihydroxy-7-methyl-3-oxo-1,3-dihydro-2-benzofuran-5-yl)-4,8-dimethyldeca-4,8-dienoate is bound by residues R265 and Q267. R265 contributes to the 6-O-desmethylmycophenolate binding site. Positions 286, 287, and 302 each coordinate S-adenosyl-L-homocysteine. S303 contributes to the (4E,8E)-10-(4,6-dihydroxy-7-methyl-3-oxo-1,3-dihydro-2-benzofuran-5-yl)-4,8-dimethyldeca-4,8-dienoate binding site. S303 serves as a coordination point for 4-farnesyl-3,5-dihydroxy-6-methylphthalide. S303 provides a ligand contact to 6-O-desmethylmycophenolate. The active-site Proton acceptor is H306. Active-site residues include E335 and E362.

Belongs to the class I-like SAM-binding methyltransferase superfamily. Cation-independent O-methyltransferase family. In terms of assembly, homodimer.

The protein localises to the cytoplasm. It localises to the cytosol. The catalysed reaction is (4E,8E)-10-(4,6-dihydroxy-7-methyl-3-oxo-1,3-dihydro-2-benzofuran-5-yl)-4,8-dimethyldeca-4,8-dienoate + S-adenosyl-L-methionine = (4E,8E)-10-(4-hydroxy-6-methoxy-7-methyl-3-oxo-1,3-dihydro-2-benzofuran-5-yl)-4,8-dimethyldeca-4,8-dienoate + S-adenosyl-L-homocysteine + H(+). It catalyses the reaction 4-farnesyl-3,5-dihydroxy-6-methylphthalide + S-adenosyl-L-methionine = 4-farnesyl-3,5-dihydroxy-6-methoxylphthalide + S-adenosyl-L-homocysteine + H(+). It carries out the reaction 6-O-desmethylmycophenolate + S-adenosyl-L-methionine = mycophenolate + S-adenosyl-L-homocysteine + H(+). It functions in the pathway secondary metabolite biosynthesis; terpenoid biosynthesis. In terms of biological role, O-methyltransferase; part of the gene cluster that mediates the biosynthesis of mycophenolic acid (MPA), the first isolated antibiotic natural product in the world obtained from a culture of Penicillium brevicompactum in 1893. MpaG' catalyzes the 5-O-methylation of three precursors in MPA biosynthesis including demethylmycophenolic acid (DMMPA), 4-farnesyl-3,5-dihydroxy-6-methylphthalide (FDHMP), and an intermediate containing three fewer carbon atoms compared to FDHMP (FDHMP-3C) with different catalytic efficiencies. The first step of the pathway is the synthesis of 5-methylorsellinic acid (5MOA) by the cytosolic polyketide synthase mpaC. 5MOA is then converted to the phthalide compound 5,7-dihydroxy-4,6-dimethylphthalide (DHMP) by the endoplasmic reticulum-bound cytochrome P450 monooxygenase mpaDE. MpaDE first catalyzes hydroxylation of 5-MOA to 4,6-dihydroxy-2-(hydroxymethyl)-3-methylbenzoic acid (DHMB). MpaDE then acts as a lactone synthase that catalyzes the ring closure to convert DHMB into DHMP. The next step is the prenylation of DHMP by the Golgi apparatus-associated prenyltransferase mpaA to yield farnesyl-DHMP (FDHMP). The ER-bound oxygenase mpaB then mediates the oxidative cleavage the C19-C20 double bond in FDHMP to yield FDHMP-3C via a mycophenolic aldehyde intermediate. The O-methyltransferase mpaG catalyzes the methylation of FDHMP-3C to yield MFDHMP-3C. MpaG and mpaB can also switch the order in which they act and, in this case, the conversion of FDHMP to MFDHMP-3C can take place via 5-O-methyl-FDHMP (MFDHMP). After the cytosolic methylation of FDHMP-3C, MFDHMP-3C enters into peroxisomes probably via free diffusion due to its low molecular weight. Upon a peroxisomal CoA ligation reaction, catalyzed by a beta-oxidation component enzyme acyl-CoA ligase ACL891, MFDHMP-3C-CoA would then be restricted to peroxisomes for the following beta-oxidation pathway steps. The peroxisomal beta-oxidation machinery than converts MFDHMP-3C-CoA into MPA_CoA, via a beta-oxidation chain-shortening process. Finally mpaH acts as a peroxisomal acyl-CoA hydrolase with high substrate specificity toward MPA-CoA to release the final product MPA. MpaH can also hydrolyze DMMPA-CoA to release demethylmycophenolic acid (DMMPA) that is further converted to MPA by mpaG. In Penicillium brevicompactum, this protein is O-methyltransferase mpaG'.